Consider the following 270-residue polypeptide: 3-methyl-2-oxobutanoate hydroxymethyltransferase (270 aa).

Residues D43 and D82 each coordinate Mg(2+). 3-methyl-2-oxobutanoate is bound by residues 43 to 44 (DS), D82, and K112. E114 serves as a coordination point for Mg(2+). The active-site Proton acceptor is E179.

This sequence belongs to the PanB family. In terms of assembly, homodecamer; pentamer of dimers. Mg(2+) is required as a cofactor.

It localises to the cytoplasm. It catalyses the reaction 3-methyl-2-oxobutanoate + (6R)-5,10-methylene-5,6,7,8-tetrahydrofolate + H2O = 2-dehydropantoate + (6S)-5,6,7,8-tetrahydrofolate. The protein operates within cofactor biosynthesis; (R)-pantothenate biosynthesis; (R)-pantoate from 3-methyl-2-oxobutanoate: step 1/2. Catalyzes the reversible reaction in which hydroxymethyl group from 5,10-methylenetetrahydrofolate is transferred onto alpha-ketoisovalerate to form ketopantoate. This chain is 3-methyl-2-oxobutanoate hydroxymethyltransferase, found in Oceanobacillus iheyensis (strain DSM 14371 / CIP 107618 / JCM 11309 / KCTC 3954 / HTE831).